A 666-amino-acid chain; its full sequence is DEAD-box ATP-dependent RNA helicase 30 (666 aa).

Positions 53 to 102 (PDPNLPRRLPFPSSSSTPTAAAPPDSGEPSRARARTETYRTGDMNPYDLR) are disordered. The span at 64–76 (PSSSSTPTAAAPP) shows a compositional bias: low complexity. Basic and acidic residues predominate over residues 80-92 (EPSRARARTETYR). A Q motif motif is present at residues 251-279 (RYFQEANFPDYCMQAIAKSGFVEPTPIQS). The region spanning 282-457 (WPMALKGRDM…RQFLQNPYKV (176 aa)) is the Helicase ATP-binding domain. 295–302 (AQTGSGKT) is a binding site for ATP. A DEAD box motif is present at residues 405 to 408 (DEAD). One can recognise a Helicase C-terminal domain in the interval 485-630 (RLSKLLSDLM…VVNPALESMA (146 aa)). The tract at residues 632-666 (SASSMGGGNFRSRGRGGFGNRSGSNSIPIRGRRPY) is disordered. Positions 636–651 (MGGGNFRSRGRGGFGN) are enriched in gly residues.

The protein belongs to the DEAD box helicase family. DDX5/DBP2 subfamily.

It localises to the nucleus. The catalysed reaction is ATP + H2O = ADP + phosphate + H(+). Functionally, ATP-dependent RNA helicase involved nonsense-mediated mRNA decay and ribosome biogenesis through rRNA processing. The chain is DEAD-box ATP-dependent RNA helicase 30 from Oryza sativa subsp. japonica (Rice).